Consider the following 491-residue polypeptide: uncharacterized protein (491 aa).

266–273 (GIQGTGKS) lines the ATP pocket.

This sequence belongs to the AAA ATPase family. Highly divergent.

It localises to the plastid. Its subcellular location is the chloroplast. This is an uncharacterized protein from Porphyra purpurea (Red seaweed).